The chain runs to 102 residues: Large ribosomal subunit protein uL24 (102 aa).

Belongs to the universal ribosomal protein uL24 family. Part of the 50S ribosomal subunit.

In terms of biological role, one of two assembly initiator proteins, it binds directly to the 5'-end of the 23S rRNA, where it nucleates assembly of the 50S subunit. One of the proteins that surrounds the polypeptide exit tunnel on the outside of the subunit. The chain is Large ribosomal subunit protein uL24 from Rhizobium etli (strain CIAT 652).